A 253-amino-acid chain; its full sequence is Succinate dehydrogenase [ubiquinone] iron-sulfur subunit, mitochondrial (253 aa).

The 2Fe-2S ferredoxin-type domain maps to 23–114; that stretch reads FKIYRWNPDK…TTKIYPLPHM (92 aa). [2Fe-2S] cluster contacts are provided by cysteine 74, cysteine 79, cysteine 82, and cysteine 94. The 4Fe-4S ferredoxin-type domain maps to 156–186; that stretch reads DRKKLDGLYECILCACCSTSCPSYWWNQEEY. Residues cysteine 166, cysteine 169, and cysteine 172 each contribute to the [4Fe-4S] cluster site. Cysteine 176 contacts [3Fe-4S] cluster. An a ubiquinone-binding site is contributed by tryptophan 181. [3Fe-4S] cluster-binding residues include cysteine 223 and cysteine 229. Cysteine 233 is a [4Fe-4S] cluster binding site.

Belongs to the succinate dehydrogenase/fumarate reductase iron-sulfur protein family. Component of complex II composed of four subunits: a flavoprotein (FP), an iron-sulfur protein (IP), and a cytochrome b composed of a large and a small subunit. Requires [2Fe-2S] cluster as cofactor. The cofactor is [3Fe-4S] cluster. [4Fe-4S] cluster serves as cofactor.

It localises to the mitochondrion inner membrane. The catalysed reaction is a quinone + succinate = fumarate + a quinol. It functions in the pathway carbohydrate metabolism; tricarboxylic acid cycle; fumarate from succinate (eukaryal route): step 1/1. In terms of biological role, iron-sulfur protein (IP) subunit of succinate dehydrogenase (SDH) that is involved in complex II of the mitochondrial electron transport chain and is responsible for transferring electrons from succinate to ubiquinone (coenzyme Q). In Candida glabrata (strain ATCC 2001 / BCRC 20586 / JCM 3761 / NBRC 0622 / NRRL Y-65 / CBS 138) (Yeast), this protein is Succinate dehydrogenase [ubiquinone] iron-sulfur subunit, mitochondrial (SDH2).